The chain runs to 443 residues: Xaa-Pro dipeptidase (443 aa).

Residues aspartate 246, aspartate 257, histidine 339, glutamate 384, and glutamate 423 each contribute to the Mn(2+) site.

The protein belongs to the peptidase M24B family. Bacterial-type prolidase subfamily. Mn(2+) is required as a cofactor.

The enzyme catalyses Xaa-L-Pro dipeptide + H2O = an L-alpha-amino acid + L-proline. Its function is as follows. Splits dipeptides with a prolyl residue in the C-terminal position. In Klebsiella pneumoniae subsp. pneumoniae (strain ATCC 700721 / MGH 78578), this protein is Xaa-Pro dipeptidase.